Reading from the N-terminus, the 159-residue chain is MLFQLNIVFKELKNPDFFFFFFFFSLPLSSFKLNLSSSSSFKLWLIVFLLDFGEIMFPAPPLPIANFSGALLPLSLFLGFLDVDLIAAKALPLEVTTNRLSSFALIVSSSSILPPRISSSSFPPLLATFFLLKKMFPAPPLPTTIGALLFGDEVVACKD.

3 helical membrane passes run 17–37, 44–64, and 67–87; these read FFFF…NLSS, WLIV…PLPI, and FSGA…DLIA.

Its subcellular location is the membrane. This is an uncharacterized protein from Saccharomyces cerevisiae (strain ATCC 204508 / S288c) (Baker's yeast).